Consider the following 685-residue polypeptide: Protein snwA (685 aa).

Disordered regions lie at residues 1–62, 88–112, 347–573, and 605–685; these read MTSL…GYLP, RKGK…TSIV, LAED…DSIY, and AVSN…SKKR. Composition is skewed to low complexity over residues 30–41 and 93–102; these read PQQQKQQQQQQQ and KSSNSNTSNM. Positions 194–360 are SNW; it reads ATYIKYTPSN…VRNERSGIIQ (167 aa). The segment covering 370 to 381 has biased composition (acidic residues); it reads DSDNDNDNDSSS. Over residues 399–494 the composition is skewed to basic and acidic residues; sequence RSTERIPSRN…DRYSKRRSDS (96 aa). Over residues 495–507 the composition is skewed to acidic residues; it reads DSDSDSDSSDSED. Residues 508–556 are compositionally biased toward basic and acidic residues; the sequence is ERVRRERKEKLERDKIRMEKKRELEREYRLEASGKKSKFNRDQDRDISE. Polar residues predominate over residues 618–631; that stretch reads EDNTSIQDVLSNSR. Positions 646–685 are enriched in basic and acidic residues; sequence PNKEFSGTDRSKDRTGPVAFEKEKKKSDDPFGFDDFSKKR.

This sequence belongs to the SNW family. In terms of assembly, interacts with cypE.

The protein localises to the nucleus. The polypeptide is Protein snwA (snwA) (Dictyostelium discoideum (Social amoeba)).